The sequence spans 288 residues: Homoserine kinase (288 aa).

79–89 (PPARGLGSSSA) contributes to the ATP binding site.

It belongs to the GHMP kinase family. Homoserine kinase subfamily.

It localises to the cytoplasm. The catalysed reaction is L-homoserine + ATP = O-phospho-L-homoserine + ADP + H(+). It functions in the pathway amino-acid biosynthesis; L-threonine biosynthesis; L-threonine from L-aspartate: step 4/5. Catalyzes the ATP-dependent phosphorylation of L-homoserine to L-homoserine phosphate. This is Homoserine kinase from Listeria monocytogenes serotype 4b (strain F2365).